The chain runs to 364 residues: Anhydro-N-acetylmuramic acid kinase (364 aa).

11-18 provides a ligand contact to ATP; that stretch reads GSSLDGID.

It belongs to the anhydro-N-acetylmuramic acid kinase family.

The enzyme catalyses 1,6-anhydro-N-acetyl-beta-muramate + ATP + H2O = N-acetyl-D-muramate 6-phosphate + ADP + H(+). The protein operates within amino-sugar metabolism; 1,6-anhydro-N-acetylmuramate degradation. It participates in cell wall biogenesis; peptidoglycan recycling. Its function is as follows. Catalyzes the specific phosphorylation of 1,6-anhydro-N-acetylmuramic acid (anhMurNAc) with the simultaneous cleavage of the 1,6-anhydro ring, generating MurNAc-6-P. Is required for the utilization of anhMurNAc either imported from the medium or derived from its own cell wall murein, and thus plays a role in cell wall recycling. The polypeptide is Anhydro-N-acetylmuramic acid kinase (Pseudomonas syringae pv. tomato (strain ATCC BAA-871 / DC3000)).